The chain runs to 227 residues: UPF0173 metal-dependent hydrolase YtkL (227 aa).

It belongs to the UPF0173 family.

The protein is UPF0173 metal-dependent hydrolase YtkL (ytkL) of Bacillus subtilis (strain 168).